A 327-amino-acid chain; its full sequence is MKQPVRVAVTGAAGNISYAMLFRIASGEMLGKDQPVILQLLEITPALDALKGVVMELEDCAFPLLAGVVQTDDATVAFKDADYALLVGARPRGPGMERKDLLEANAAIFSAQGKALNEVASRDVKVLVVGNPANTNALIAQRNAPDLDPRNFTAMTRLDHNRGMAQLAEETNSTVNDVKKMIIWGNHSSTQYPDLTECTVNGKPALEQVDRDWYENSYIPSVQKRGAAIIEARGASSAASAANAAIAHMRTWALGTDENDWVSMGVYSQGEYGIAKGLIYSFPCTCSNGDWKIVEGLDTSSDFSQEKMKATEQELSEERDAVEHLLP.

11–17 (GAAGNIS) provides a ligand contact to NAD(+). 2 residues coordinate substrate: R92 and R98. NAD(+) is bound by residues N105, Q112, and 129-131 (VGN). Substrate is bound by residues N131 and R162. H187 functions as the Proton acceptor in the catalytic mechanism. The segment at 304–327 (SQEKMKATEQELSEERDAVEHLLP) is disordered.

Belongs to the LDH/MDH superfamily. MDH type 2 family.

The catalysed reaction is (S)-malate + NAD(+) = oxaloacetate + NADH + H(+). In terms of biological role, catalyzes the reversible oxidation of malate to oxaloacetate. The chain is Malate dehydrogenase from Psychrobacter sp. (strain PRwf-1).